Reading from the N-terminus, the 1268-residue chain is Protein transport protein Sec24B (1268 aa).

Composition is skewed to low complexity over residues 1–14 (MSAPAGSSHPAASA) and 21–48 (GGAAVSGAAAPAGPGAGPAPHQQNGPAQ). Disordered regions lie at residues 1 to 71 (MSAP…SGHY), 216 to 263 (APTV…LTWS), 303 to 345 (QNVQ…SVTQ), and 362 to 451 (NNQA…VVPQ). At Ser2 the chain carries N-acetylserine. At Ser55 the chain carries Phosphoserine. The segment covering 225-234 (NSFSGQNTAI) has biased composition (polar residues). 3 stretches are compositionally biased toward low complexity: residues 245 to 255 (SQQHHQQQSLS), 311 to 332 (SPVVSTVLSGSSGSSSTRTPPT), and 365 to 375 (ASSAPTPLSST). The residue at position 329 (Thr329) is a Phosphothreonine. Residues 376–389 (SDDEEEEEEDEEAG) show a composition bias toward acidic residues. Residues 426 to 450 (APDPAPEPDPASAPAPASAPAPVVP) show a composition bias toward pro residues. Zn(2+) is bound by residues Cys605, Cys608, Cys626, and Cys629. The tract at residues 605–629 (CRSCRTYINPFVSFIDQRRWKCNLC) is zinc finger-like. The Gelsolin-like repeat unit spans residues 1141–1213 (PQPPLQKLSA…TLSSERARSF (73 aa)). Ser1224 is subject to Phosphoserine.

This sequence belongs to the SEC23/SEC24 family. SEC24 subfamily. COPII is composed of at least five proteins: the Sec23/24 complex, the Sec13/31 complex and SAR1. Interacts with STING1; promoting STING1 translocation to COPII vesicles in a STEEP1-dependent manner. Interacts with RNF139. Interacts with TMED2 and TMED10. Interacts with CNIH4.

It is found in the cytoplasmic vesicle. Its subcellular location is the COPII-coated vesicle membrane. The protein localises to the endoplasmic reticulum membrane. It localises to the cytoplasm. The protein resides in the cytosol. Functionally, component of the coat protein complex II (COPII) which promotes the formation of transport vesicles from the endoplasmic reticulum (ER). The coat has two main functions, the physical deformation of the endoplasmic reticulum membrane into vesicles and the selection of cargo molecules for their transport to the Golgi complex. Plays a central role in cargo selection within the COPII complex and together with SEC24A may have a different specificity compared to SEC24C and SEC24D. May package preferentially cargos with cytoplasmic DxE or LxxLE motifs and may also recognize conformational epitopes. The protein is Protein transport protein Sec24B of Homo sapiens (Human).